A 484-amino-acid chain; its full sequence is Iroquois-class homeodomain protein IRX-5 (484 aa).

Residues 112–174 constitute a DNA-binding region (homeobox; TALE-type); it reads DPAYRKNATR…NARRRLKKEN (63 aa). Disordered regions lie at residues 176–393 and 424–443; these read MTWT…QCPF and GHPG…FNGL. The span at 185–202 shows a compositional bias: acidic residues; the sequence is EDEEEEENIDLEKNDEDE. Composition is skewed to basic and acidic residues over residues 203–212 and 249–265; these read PQKPEDKGDL and SDFK…ELPR. Ser-273 carries the phosphoserine modification. The segment covering 318–328 has biased composition (pro residues); that stretch reads SPPPPPPPPPA. Over residues 375–389 the composition is skewed to low complexity; it reads SRASPAPAPARSPSA. At Ser-465 the chain carries Phosphoserine.

Belongs to the TALE/IRO homeobox family. Not expressed in the developing metanephric kidney or adult kidney.

Its subcellular location is the nucleus. Establishes the cardiac repolarization gradient by its repressive actions on the KCND2 potassium-channel gene. Required for retinal cone bipolar cell differentiation. May regulate contrast adaptation in the retina and control specific aspects of visual function in circuits of the mammalian retina. Involved in craniofacial and gonadal development. Modulates the migration of progenitor cell populations in branchial arches and gonads by repressing CXCL12. This Mus musculus (Mouse) protein is Iroquois-class homeodomain protein IRX-5 (Irx5).